Reading from the N-terminus, the 121-residue chain is Large ribosomal subunit protein bL12 (121 aa).

The protein belongs to the bacterial ribosomal protein bL12 family. As to quaternary structure, homodimer. Part of the ribosomal stalk of the 50S ribosomal subunit. Forms a multimeric L10(L12)X complex, where L10 forms an elongated spine to which 2 to 4 L12 dimers bind in a sequential fashion. Binds GTP-bound translation factors.

Its function is as follows. Forms part of the ribosomal stalk which helps the ribosome interact with GTP-bound translation factors. Is thus essential for accurate translation. The sequence is that of Large ribosomal subunit protein bL12 from Lactococcus lactis subsp. cremoris (strain MG1363).